The chain runs to 90 residues: Probable Fe(2+)-trafficking protein (90 aa).

This sequence belongs to the Fe(2+)-trafficking protein family. Monomer.

In terms of biological role, could be a mediator in iron transactions between iron acquisition and iron-requiring processes, such as synthesis and/or repair of Fe-S clusters in biosynthetic enzymes. This chain is Probable Fe(2+)-trafficking protein, found in Pectobacterium carotovorum subsp. carotovorum (strain PC1).